The sequence spans 363 residues: D-alanine--D-alanine ligase (363 aa).

In terms of domain architecture, ATP-grasp spans 148–353 (KKLLAAEGLP…YGTLVSTLIE (206 aa)). 176 to 231 (RERLGLPVFVKPARAGSSIGITKVDDWAALDTAIAAAREHDPKVIVEAGIVGREVE) contributes to the ATP binding site. Mg(2+) contacts are provided by Asp308, Glu320, and Asn322.

This sequence belongs to the D-alanine--D-alanine ligase family. Mg(2+) serves as cofactor. Mn(2+) is required as a cofactor.

The protein localises to the cytoplasm. It carries out the reaction 2 D-alanine + ATP = D-alanyl-D-alanine + ADP + phosphate + H(+). Its pathway is cell wall biogenesis; peptidoglycan biosynthesis. Cell wall formation. This is D-alanine--D-alanine ligase from Nocardia farcinica (strain IFM 10152).